The following is a 242-amino-acid chain: N-glycosylase/DNA lyase (242 aa).

8-oxoguanine is bound by residues Gln25, Ser52, and Trp63. Positions 119 to 183 (KSYYRDMNRL…VDARIERITR (65 aa)) are helix-hairpin-helix. Residue Lys143 is the Schiff-base intermediate with DNA of the active site. The 8-oxoguanine site is built by Phe147 and Pro173. Asp175 is an active-site residue. 8-oxoguanine is bound by residues Asp209 and Trp213.

Belongs to the archaeal N-glycosylase/DNA lyase (AGOG) family.

The enzyme catalyses 2'-deoxyribonucleotide-(2'-deoxyribose 5'-phosphate)-2'-deoxyribonucleotide-DNA = a 3'-end 2'-deoxyribonucleotide-(2,3-dehydro-2,3-deoxyribose 5'-phosphate)-DNA + a 5'-end 5'-phospho-2'-deoxyribonucleoside-DNA + H(+). Functionally, DNA repair enzyme that is part of the base excision repair (BER) pathway; protects from oxidative damage by removing the major product of DNA oxidation, 8-oxoguanine (GO), from single- and double-stranded DNA substrates. The chain is N-glycosylase/DNA lyase from Methanopyrus kandleri (strain AV19 / DSM 6324 / JCM 9639 / NBRC 100938).